Consider the following 69-residue polypeptide: Cytochrome c oxidase subunit 8A, mitochondrial (69 aa).

Residues 1–25 (MSVLTPLLLRGLTGSARRLPVPRAK) constitute a mitochondrion transit peptide. The SIFI-degron signature appears at 2 to 19 (SVLTPLLLRGLTGSARRL). Residues 26–36 (IHSLPPEGKLG) lie on the Mitochondrial matrix side of the membrane. The chain crosses the membrane as a helical span at residues 37-60 (IMELAVGLTSCFVTFLLPAGWILS). The Mitochondrial intermembrane segment spans residues 61 to 69 (HLETYRRPE).

The protein belongs to the cytochrome c oxidase VIII family. In terms of assembly, component of the cytochrome c oxidase (complex IV, CIV), a multisubunit enzyme composed of 14 subunits. The complex is composed of a catalytic core of 3 subunits MT-CO1, MT-CO2 and MT-CO3, encoded in the mitochondrial DNA, and 11 supernumerary subunits COX4I1 (or COX4I2), COX5A, COX5B, COX6A1 (or COX6A2), COX6B1 (or COX6B2), COX6C, COX7A2 (or COX7A1), COX7B, COX7C, COX8A and NDUFA4, which are encoded in the nuclear genome. The complex exists as a monomer or a dimer and forms supercomplexes (SCs) in the inner mitochondrial membrane with NADH-ubiquinone oxidoreductase (complex I, CI) and ubiquinol-cytochrome c oxidoreductase (cytochrome b-c1 complex, complex III, CIII), resulting in different assemblies (supercomplex SCI(1)III(2)IV(1) and megacomplex MCI(2)III(2)IV(2)). In response to mitochondrial stress, the precursor protein is ubiquitinated by the SIFI complex in the cytoplasm before mitochondrial import, leading to its degradation. Within the SIFI complex, UBR4 initiates ubiquitin chain that are further elongated or branched by KCMF1. In terms of tissue distribution, widely expressed.

It is found in the mitochondrion inner membrane. It participates in energy metabolism; oxidative phosphorylation. Its function is as follows. Component of the cytochrome c oxidase, the last enzyme in the mitochondrial electron transport chain which drives oxidative phosphorylation. The respiratory chain contains 3 multisubunit complexes succinate dehydrogenase (complex II, CII), ubiquinol-cytochrome c oxidoreductase (cytochrome b-c1 complex, complex III, CIII) and cytochrome c oxidase (complex IV, CIV), that cooperate to transfer electrons derived from NADH and succinate to molecular oxygen, creating an electrochemical gradient over the inner membrane that drives transmembrane transport and the ATP synthase. Cytochrome c oxidase is the component of the respiratory chain that catalyzes the reduction of oxygen to water. Electrons originating from reduced cytochrome c in the intermembrane space (IMS) are transferred via the dinuclear copper A center (CU(A)) of subunit 2 and heme A of subunit 1 to the active site in subunit 1, a binuclear center (BNC) formed by heme A3 and copper B (CU(B)). The BNC reduces molecular oxygen to 2 water molecules using 4 electrons from cytochrome c in the IMS and 4 protons from the mitochondrial matrix. This Homo sapiens (Human) protein is Cytochrome c oxidase subunit 8A, mitochondrial (COX8A).